Reading from the N-terminus, the 362-residue chain is MTNYYAEITGWGKCLPPAVLSNDDLSTFLDTSDEWIRTRTGIENRRISHVNTSDLATVAAKQALARAGITAQDIDLIIVATCSPDSLIPNIASMVQKNLEIEAAAAFDLNAACTGFVYGLETGTRLIQSGAYRHALIIGAERLSFYIDWAMRDTAVLFGDGAGAVVLSRTEEAVGLQNAKSGCDAQGRDILSVPKFGTSMDRFAADNGYWDFNFVGKEIFKRAVKGMGSAAAHVLAHAGMSKDDINVVIPHQANIRIIQTLCDLSGIDQSKAFVNIQKYGNTSAATVPIALCEAVEQGHIKAGDNILLAAFGAGLTWGAGLVKWGQRVEAISESDAALPECDKSALELLKNAIELCNARRDK.

Residues Cys-113 and His-251 contribute to the active site. The tract at residues 252-256 (QANIR) is ACP-binding. Residue Asn-281 is part of the active site.

Belongs to the thiolase-like superfamily. FabH family. In terms of assembly, homodimer.

The protein localises to the cytoplasm. It catalyses the reaction malonyl-[ACP] + acetyl-CoA + H(+) = 3-oxobutanoyl-[ACP] + CO2 + CoA. The protein operates within lipid metabolism; fatty acid biosynthesis. Its function is as follows. Catalyzes the condensation reaction of fatty acid synthesis by the addition to an acyl acceptor of two carbons from malonyl-ACP. Catalyzes the first condensation reaction which initiates fatty acid synthesis and may therefore play a role in governing the total rate of fatty acid production. Possesses both acetoacetyl-ACP synthase and acetyl transacylase activities. Its substrate specificity determines the biosynthesis of branched-chain and/or straight-chain of fatty acids. This Vibrio vulnificus (strain CMCP6) protein is Beta-ketoacyl-[acyl-carrier-protein] synthase III 2.